The following is a 476-amino-acid chain: POC1 centriolar protein homolog B (476 aa).

WD repeat units follow at residues G16 to R55, G58 to E97, A100 to S139, R142 to N181, S183 to H223, V226 to T265, and G268 to K307. Positions A429 to L468 form a coiled coil.

This sequence belongs to the WD repeat POC1 family. As to quaternary structure, interacts with POC1A. Interacts with FAM161A. Interacts with CEP44; the interaction is direct and recruits POC1B to centriolar microtubules. Forms a microtubule-associated complex with POC5, CETN2 and FAM161A. Interacts with CCDC15. Post-translationally, phosphorylated in mitotic cells that may be mediated by CDK1. Expressed in the retina.

It is found in the cytoplasm. The protein resides in the cytoskeleton. The protein localises to the microtubule organizing center. Its subcellular location is the centrosome. It localises to the centriole. It is found in the cilium basal body. The protein resides in the spindle pole. Functionally, plays an important role in centriole assembly and/or stability and ciliogenesis. Involved in early steps of centriole duplication, as well as in the later steps of centriole length control. Acts in concert with POC1A to ensure centriole integrity and proper mitotic spindle formation. Required for primary cilia formation, ciliary length and also cell proliferation. Required for retinal integrity. Acts as a positive regulator of centriole elongation. The protein is POC1 centriolar protein homolog B (Poc1b) of Mus musculus (Mouse).